The sequence spans 129 residues: Ribosome-binding factor A (129 aa).

This sequence belongs to the RbfA family. Monomer. Binds 30S ribosomal subunits, but not 50S ribosomal subunits or 70S ribosomes.

It localises to the cytoplasm. Functionally, one of several proteins that assist in the late maturation steps of the functional core of the 30S ribosomal subunit. Associates with free 30S ribosomal subunits (but not with 30S subunits that are part of 70S ribosomes or polysomes). Required for efficient processing of 16S rRNA. May interact with the 5'-terminal helix region of 16S rRNA. This chain is Ribosome-binding factor A, found in Gloeobacter violaceus (strain ATCC 29082 / PCC 7421).